We begin with the raw amino-acid sequence, 456 residues long: Bifunctional protein GlmU (456 aa).

Residues 1 to 229 are pyrophosphorylase; it reads MTKKALSAVI…VMEVEGANNR (229 aa). UDP-N-acetyl-alpha-D-glucosamine contacts are provided by residues 11-14, K25, Q76, 81-82, 103-105, G140, E154, N169, and N227; these read LAAG, GT, and YGD. D105 lines the Mg(2+) pocket. Residue N227 coordinates Mg(2+). A linker region spans residues 230–250; that stretch reads LQLAALERYLQNKQASKLLLE. The interval 251–456 is N-acetyltransferase; it reads GVMIYDPARF…QGWQRPIKKK (206 aa). UDP-N-acetyl-alpha-D-glucosamine-binding residues include R333 and K351. The active-site Proton acceptor is H363. UDP-N-acetyl-alpha-D-glucosamine contacts are provided by Y366 and N377. Acetyl-CoA-binding positions include A380, 386-387, S405, A423, and R440; that span reads NY.

In the N-terminal section; belongs to the N-acetylglucosamine-1-phosphate uridyltransferase family. The protein in the C-terminal section; belongs to the transferase hexapeptide repeat family. Homotrimer. It depends on Mg(2+) as a cofactor.

It localises to the cytoplasm. It carries out the reaction alpha-D-glucosamine 1-phosphate + acetyl-CoA = N-acetyl-alpha-D-glucosamine 1-phosphate + CoA + H(+). It catalyses the reaction N-acetyl-alpha-D-glucosamine 1-phosphate + UTP + H(+) = UDP-N-acetyl-alpha-D-glucosamine + diphosphate. It participates in nucleotide-sugar biosynthesis; UDP-N-acetyl-alpha-D-glucosamine biosynthesis; N-acetyl-alpha-D-glucosamine 1-phosphate from alpha-D-glucosamine 6-phosphate (route II): step 2/2. It functions in the pathway nucleotide-sugar biosynthesis; UDP-N-acetyl-alpha-D-glucosamine biosynthesis; UDP-N-acetyl-alpha-D-glucosamine from N-acetyl-alpha-D-glucosamine 1-phosphate: step 1/1. The protein operates within bacterial outer membrane biogenesis; LPS lipid A biosynthesis. In terms of biological role, catalyzes the last two sequential reactions in the de novo biosynthetic pathway for UDP-N-acetylglucosamine (UDP-GlcNAc). The C-terminal domain catalyzes the transfer of acetyl group from acetyl coenzyme A to glucosamine-1-phosphate (GlcN-1-P) to produce N-acetylglucosamine-1-phosphate (GlcNAc-1-P), which is converted into UDP-GlcNAc by the transfer of uridine 5-monophosphate (from uridine 5-triphosphate), a reaction catalyzed by the N-terminal domain. This Haemophilus influenzae (strain PittGG) protein is Bifunctional protein GlmU.